We begin with the raw amino-acid sequence, 365 residues long: Transcription elongation factor, mitochondrial (365 aa).

The transit peptide at 1–40 (MAWRANLACLIKAGGRTRWFPLPEYLSMSPVLHNTCSRRK) directs the protein to the mitochondrion.

It belongs to the TEFM family. In terms of assembly, interacts with POLRMT.

Its subcellular location is the mitochondrion matrix. The protein localises to the mitochondrion nucleoid. Its function is as follows. Transcription elongation factor which increases mitochondrial RNA polymerase processivity. Regulates transcription of the mitochondrial genome, including genes important for the oxidative phosphorylation machinery. This chain is Transcription elongation factor, mitochondrial (Tefm), found in Rattus norvegicus (Rat).